We begin with the raw amino-acid sequence, 407 residues long: Endo-1,4-beta-xylanase (407 aa).

The signal sequence occupies residues 1 to 28 (MRNVVRKPLTIGLALTLLLPMGMTATSA). The GH10 domain maps to 42–406 (ALNAPQLDQR…KPAYWAIIDH (365 aa)). Glutamate 187 functions as the Proton donor in the catalytic mechanism. Glutamate 293 (nucleophile) is an active-site residue.

It belongs to the glycosyl hydrolase 10 (cellulase F) family.

It localises to the secreted. The enzyme catalyses Endohydrolysis of (1-&gt;4)-beta-D-xylosidic linkages in xylans.. Its pathway is glycan degradation; xylan degradation. This chain is Endo-1,4-beta-xylanase, found in Geobacillus stearothermophilus (Bacillus stearothermophilus).